The following is a 382-amino-acid chain: RNA binding protein fox-1 homolog 1 (382 aa).

The tract at residues 1–121 is disordered; sequence MNCEREQLRG…NKSQPKRLHV (121 aa). Residues 70–87 show a composition bias toward polar residues; that stretch reads QTHSEQSPADTSAQTVSG. Positions 88–99 are enriched in low complexity; the sequence is TATQTDDAAPTD. Residues 100–113 show a composition bias toward polar residues; sequence GQPQTQPSENTENK. An RRM domain is found at 117–193; it reads KRLHVSNIPF…RKIEVNNATA (77 aa). Asymmetric dimethylarginine is present on Arg-317. Residues 357–382 are disordered; that stretch reads MPQGSSPSTDFRGAKLHTSRPLLSGS.

Binds to the C-terminus of ATXN2.

Its subcellular location is the nucleus. It is found in the cytoplasm. Functionally, RNA-binding protein that regulates alternative splicing events by binding to 5'-UGCAUGU-3' elements. Prevents binding of U2AF2 to the 3'-splice site. Regulates alternative splicing of tissue-specific exons and of differentially spliced exons during erythropoiesis. This Pongo abelii (Sumatran orangutan) protein is RNA binding protein fox-1 homolog 1 (RBFOX1).